A 157-amino-acid chain; its full sequence is Glutaredoxin-2, mitochondrial (157 aa).

The transit peptide at 1-19 (MSWYRAASVGRRLVASGRI) directs the protein to the mitochondrion. The Glutaredoxin domain occupies 50–150 (VNQIQETISN…PLVHQCYLNK (101 aa)). C61 provides a ligand contact to [2Fe-2S] cluster. A glutathione-binding site is contributed by K67. At C70 the chain carries S-glutathionyl cysteine; alternate. C70 and C73 are oxidised to a cystine. Residues Q102 and V114 each coordinate glutathione. [2Fe-2S] cluster is bound at residue C146.

It belongs to the glutaredoxin family. In terms of assembly, monomer; active form. Homodimer; inactive form. The homodimer is probably linked by 1 2Fe-2S cluster.

Its subcellular location is the mitochondrion. It is found in the nucleus. With respect to regulation, the 2Fe-2S present in the homodimer leads to inactivation of the enzyme. The 2Fe-2S may serve as a redox sensor: the presence of one-electron oxidants or reductants leading to the loss of the 2Fe-2S cluster, subsequent monomerization and activation of the enzyme. Functionally, glutathione-dependent oxidoreductase that facilitates the maintenance of mitochondrial redox homeostasis upon induction of apoptosis by oxidative stress. Involved in response to hydrogen peroxide and regulation of apoptosis caused by oxidative stress. Acts as a very efficient catalyst of monothiol reactions because of its high affinity for protein glutathione-mixed disulfides. Can receive electrons not only from glutathione (GSH), but also from thioredoxin reductase supporting both monothiol and dithiol reactions. Efficiently catalyzes both glutathionylation and deglutathionylation of mitochondrial complex I, which in turn regulates the superoxide production by the complex. Overexpression decreases the susceptibility to apoptosis and prevents loss of cardiolipin and cytochrome c release. The protein is Glutaredoxin-2, mitochondrial (Glrx2) of Rattus norvegicus (Rat).